We begin with the raw amino-acid sequence, 111 residues long: Ribonuclease P protein component (111 aa).

This sequence belongs to the RnpA family. Consists of a catalytic RNA component (M1 or rnpB) and a protein subunit.

The catalysed reaction is Endonucleolytic cleavage of RNA, removing 5'-extranucleotides from tRNA precursor.. Its function is as follows. RNaseP catalyzes the removal of the 5'-leader sequence from pre-tRNA to produce the mature 5'-terminus. It can also cleave other RNA substrates such as 4.5S RNA. The protein component plays an auxiliary but essential role in vivo by binding to the 5'-leader sequence and broadening the substrate specificity of the ribozyme. The protein is Ribonuclease P protein component of Streptococcus thermophilus (strain ATCC BAA-491 / LMD-9).